The primary structure comprises 316 residues: Apolipoprotein E (316 aa).

The first 18 residues, 1-18 (MKVLWVALVITLLAGCQA), serve as a signal peptide directing secretion. 8 tandem repeats follow at residues 79-100 (VLMD…GQLG), 101-122 (PIAQ…ARLA), 123-144 (SDME…AMMG), 145-166 (QTTD…KRLL), 167-188 (RDAE…EGSE), 189-210 (RSVS…VRAA), 211-232 (TVGT…QKLR), and 233-254 (GRME…EQLE). Positions 79 to 254 (VLMDETMKEV…HLEEMREQLE (176 aa)) are 8 X 22 AA approximate tandem repeats. M142 carries the methionine sulfoxide modification. The tract at residues 157–167 (HLRKLRKRLLR) is LDL and other lipoprotein receptors binding. Position 161 to 164 (161 to 164 (LRKR)) interacts with heparin. Residues 209–289 (AATVGTLASQ…SWFEPLVEDM (81 aa)) are lipid-binding and lipoprotein association. A heparin-binding site is contributed by 228–235 (HQKLRGRM). Residues 265–316 (SQMRLQAEAFQARLKSWFEPLVEDMQRQWAGLVEKVQLAMATSPTSAPIENS) form a homooligomerization region. The interval 277–289 (RLKSWFEPLVEDM) is specificity for association with VLDL.

Belongs to the apolipoprotein A1/A4/E family. As to quaternary structure, homotetramer. May interact with ABCA1; functionally associated with ABCA1 in the biogenesis of HDLs. May interact with APP/A4 amyloid-beta peptide; the interaction is extremely stable in vitro but its physiological significance is unclear. May interact with MAPT. May interact with MAP2. In the cerebrospinal fluid, interacts with secreted SORL1. Interacts with PMEL; this allows the loading of PMEL luminal fragment on ILVs to induce fibril nucleation. Post-translationally, APOE exists as multiple glycosylated and sialylated glycoforms within cells and in plasma. The extent of glycosylation and sialylation are tissue and context specific. Glycated in plasma VLDL. In terms of processing, phosphorylated by FAM20C in the extracellular medium.

Its subcellular location is the secreted. The protein localises to the extracellular space. It is found in the extracellular matrix. It localises to the extracellular vesicle. The protein resides in the endosome. Its subcellular location is the multivesicular body. Functionally, APOE is an apolipoprotein, a protein associating with lipid particles, that mainly functions in lipoprotein-mediated lipid transport between organs via the plasma and interstitial fluids. APOE is a core component of plasma lipoproteins and is involved in their production, conversion and clearance. Apolipoproteins are amphipathic molecules that interact both with lipids of the lipoprotein particle core and the aqueous environment of the plasma. As such, APOE associates with chylomicrons, chylomicron remnants, very low density lipoproteins (VLDL) and intermediate density lipoproteins (IDL) but shows a preferential binding to high-density lipoproteins (HDL). It also binds a wide range of cellular receptors including the LDL receptor/LDLR and the very low-density lipoprotein receptor/VLDLR that mediate the cellular uptake of the APOE-containing lipoprotein particles. Finally, APOE also has a heparin-binding activity and binds heparan-sulfate proteoglycans on the surface of cells, a property that supports the capture and the receptor-mediated uptake of APOE-containing lipoproteins by cells. This Orcinus orca (Killer whale) protein is Apolipoprotein E (APOE).